Here is a 541-residue protein sequence, read N- to C-terminus: Chaperonin GroEL 1 (541 aa).

ATP is bound by residues 29–32 (TLGP), 86–90 (DGTTT), Gly-413, 477–479 (NAA), and Asp-493.

Belongs to the chaperonin (HSP60) family. Forms a cylinder of 14 subunits composed of two heptameric rings stacked back-to-back. Interacts with the co-chaperonin GroES.

The protein localises to the cytoplasm. It catalyses the reaction ATP + H2O + a folded polypeptide = ADP + phosphate + an unfolded polypeptide.. Functionally, together with its co-chaperonin GroES, plays an essential role in assisting protein folding. The GroEL-GroES system forms a nano-cage that allows encapsulation of the non-native substrate proteins and provides a physical environment optimized to promote and accelerate protein folding. This chain is Chaperonin GroEL 1, found in Nocardioides sp. (strain ATCC BAA-499 / JS614).